The following is an 89-amino-acid chain: Small ribosomal subunit protein bS20 (89 aa).

The segment at 1–20 is disordered; the sequence is MANHKSAEKRARQTIKRTER.

It belongs to the bacterial ribosomal protein bS20 family.

Functionally, binds directly to 16S ribosomal RNA. The polypeptide is Small ribosomal subunit protein bS20 (Campylobacter curvus (strain 525.92)).